A 506-amino-acid polypeptide reads, in one-letter code: Lysine--tRNA ligase (506 aa).

Residues glutamate 416 and glutamate 423 each coordinate Mg(2+).

Belongs to the class-II aminoacyl-tRNA synthetase family. As to quaternary structure, homodimer. The cofactor is Mg(2+).

Its subcellular location is the cytoplasm. The catalysed reaction is tRNA(Lys) + L-lysine + ATP = L-lysyl-tRNA(Lys) + AMP + diphosphate. In Sodalis glossinidius (strain morsitans), this protein is Lysine--tRNA ligase.